A 498-amino-acid polypeptide reads, in one-letter code: L-amino acid oxidase (498 aa).

An N-terminal signal peptide occupies residues 1 to 11 (SLLFLAAVGSC). An intrachain disulfide couples Cys-21 to Cys-184. FAD-binding positions include 54-55 (MS), 74-75 (EA), 74-78 (EASER), Arg-82, and 98-101 (GPMR). Residue Arg-101 coordinates substrate. The N-linked (GlcNAc...) asparagine glycan is linked to Asn-183. His-234 lines the substrate pocket. Val-272 is a binding site for FAD. Cys-342 and Cys-423 are oxidised to a cystine. Position 383 (Tyr-383) interacts with substrate. FAD contacts are provided by residues Glu-468, 475–480 (GWIDST), and 476–480 (WIDST). 475 to 476 (GW) contacts substrate.

Belongs to the flavin monoamine oxidase family. FIG1 subfamily. In terms of assembly, homodimer; non-covalently linked. Requires FAD as cofactor. N-glycosylated. Contains 18.73% carbohydrates. Expressed by the venom gland.

The protein resides in the secreted. It catalyses the reaction an L-alpha-amino acid + O2 + H2O = a 2-oxocarboxylate + H2O2 + NH4(+). The enzyme catalyses L-leucine + O2 + H2O = 4-methyl-2-oxopentanoate + H2O2 + NH4(+). Strongly inhibited by glutathione, and moderately inhibited by PMSF, acetate iodine and glutamic acid. Is also inhibited by Zn(2+) ions, but not by Ca(2+), Mg(2+) and Mn(2+). Catalyzes an oxidative deamination of predominantly hydrophobic and aromatic L-amino acids, thus producing hydrogen peroxide that may contribute to the diverse toxic effects of this enzyme. This enzyme shows activity on L-Leu. This enzyme inhibits platelet aggregation in human platelet rich plasma induced by ADP (IC(50)=3.2 mg/mL), and shows antibacterial activities on both Gram-positive and Gram-negative bacteria (P.aeruginosa, V.cholerae, S.aureus, E.faecalis and E.coli). These two effects are due to hydrogen peroxide, since they are inhibited by catalase. It also induces edema in mouse paw pads but does not show hemolytic activity. This protein may also have activities in hemorrhage, and apoptosis. This Bothrops pictus (Desert lancehead) protein is L-amino acid oxidase.